Here is a 254-residue protein sequence, read N- to C-terminus: Probable glutathione transferase omega-2 (254 aa).

The 81-residue stretch at glycine 25–arginine 105 folds into the GST N-terminal domain. Catalysis depends on cysteine 35, which acts as the Nucleophile. Glutathione is bound by residues lysine 62, valine 75, and glutamate 89–serine 90. Residues aspartate 110 to phenylalanine 239 enclose the GST C-terminal domain.

Belongs to the GST superfamily. Omega family.

It catalyses the reaction RX + glutathione = an S-substituted glutathione + a halide anion + H(+). The catalysed reaction is L-dehydroascorbate + 2 glutathione = glutathione disulfide + L-ascorbate. The enzyme catalyses methylarsonate + 2 glutathione + H(+) = methylarsonous acid + glutathione disulfide + H2O. In terms of biological role, exhibits glutathione-dependent thiol transferase activity. Has dehydroascorbate reductase activity and may contribute to the recycling of ascorbic acid. Participates in the biotransformation of inorganic arsenic and reduces monomethylarsonic acid (MMA). The polypeptide is Probable glutathione transferase omega-2 (gsto-2) (Caenorhabditis elegans).